The sequence spans 66 residues: Large ribosomal subunit protein uL30 (66 aa).

Belongs to the universal ribosomal protein uL30 family. As to quaternary structure, part of the 50S ribosomal subunit.

This is Large ribosomal subunit protein uL30 from Brucella anthropi (strain ATCC 49188 / DSM 6882 / CCUG 24695 / JCM 21032 / LMG 3331 / NBRC 15819 / NCTC 12168 / Alc 37) (Ochrobactrum anthropi).